The primary structure comprises 719 residues: Fatty acid oxidation complex subunit alpha (719 aa).

The segment at 1–190 (MVYQGNRITV…KLGLVDATVA (190 aa)) is enoyl-CoA hydratase/isomerase. Asp298 contacts substrate. Residues 313–719 (HDINEAAVLG…AAGETFYATA (407 aa)) are 3-hydroxyacyl-CoA dehydrogenase. Residues Met326, Asp345, 402 to 404 (VVE), Lys409, and Ser431 each bind NAD(+). The active-site For 3-hydroxyacyl-CoA dehydrogenase activity is the His452. Asn455 is a binding site for NAD(+). Asn502 provides a ligand contact to substrate.

In the N-terminal section; belongs to the enoyl-CoA hydratase/isomerase family. This sequence in the C-terminal section; belongs to the 3-hydroxyacyl-CoA dehydrogenase family. As to quaternary structure, heterotetramer of two alpha chains (FadB) and two beta chains (FadA).

The enzyme catalyses a (3S)-3-hydroxyacyl-CoA + NAD(+) = a 3-oxoacyl-CoA + NADH + H(+). It carries out the reaction a (3S)-3-hydroxyacyl-CoA = a (2E)-enoyl-CoA + H2O. It catalyses the reaction a 4-saturated-(3S)-3-hydroxyacyl-CoA = a (3E)-enoyl-CoA + H2O. The catalysed reaction is (3S)-3-hydroxybutanoyl-CoA = (3R)-3-hydroxybutanoyl-CoA. The enzyme catalyses a (3Z)-enoyl-CoA = a 4-saturated (2E)-enoyl-CoA. It carries out the reaction a (3E)-enoyl-CoA = a 4-saturated (2E)-enoyl-CoA. It functions in the pathway lipid metabolism; fatty acid beta-oxidation. Its function is as follows. Involved in the aerobic and anaerobic degradation of long-chain fatty acids via beta-oxidation cycle. Catalyzes the formation of 3-oxoacyl-CoA from enoyl-CoA via L-3-hydroxyacyl-CoA. It can also use D-3-hydroxyacyl-CoA and cis-3-enoyl-CoA as substrate. In Psychrobacter cryohalolentis (strain ATCC BAA-1226 / DSM 17306 / VKM B-2378 / K5), this protein is Fatty acid oxidation complex subunit alpha.